The following is a 214-amino-acid chain: Orotate phosphoribosyltransferase (214 aa).

Residue K26 participates in 5-phospho-alpha-D-ribose 1-diphosphate binding. Residue 34–35 (FF) participates in orotate binding. 5-phospho-alpha-D-ribose 1-diphosphate contacts are provided by residues 72 to 73 (YK), R99, K100, K103, H105, and 124 to 132 (DDVITAGTA). Residues T128 and R156 each coordinate orotate.

This sequence belongs to the purine/pyrimidine phosphoribosyltransferase family. PyrE subfamily. Homodimer. Requires Mg(2+) as cofactor.

It catalyses the reaction orotidine 5'-phosphate + diphosphate = orotate + 5-phospho-alpha-D-ribose 1-diphosphate. It participates in pyrimidine metabolism; UMP biosynthesis via de novo pathway; UMP from orotate: step 1/2. Catalyzes the transfer of a ribosyl phosphate group from 5-phosphoribose 1-diphosphate to orotate, leading to the formation of orotidine monophosphate (OMP). The protein is Orotate phosphoribosyltransferase of Pasteurella multocida (strain Pm70).